The primary structure comprises 34 residues: Aspartate aminotransferase 2 (34 aa).

It belongs to the class-I pyridoxal-phosphate-dependent aminotransferase family. In terms of assembly, homodimer. Pyridoxal 5'-phosphate serves as cofactor.

It carries out the reaction L-aspartate + 2-oxoglutarate = oxaloacetate + L-glutamate. In terms of biological role, important for the metabolism of amino acids and Krebs-cycle related organic acids. In plants, it is involved in nitrogen metabolism and in aspects of carbon and energy metabolism. This chain is Aspartate aminotransferase 2, found in Pseudotsuga menziesii (Douglas-fir).